Reading from the N-terminus, the 276-residue chain is Halorhodopsin (276 aa).

A propeptide spanning residues 1–21 (MTAASTTATTMLQATQSDVLQ) is cleaved from the precursor. Residues 22–25 (EIQS) lie on the Extracellular side of the membrane. Residues 26–51 (NFLLNSSIWVNIALAGVVILLFVAMG) traverse the membrane as a helical segment. The Cytoplasmic segment spans residues 52 to 57 (RDIESP). A helical membrane pass occupies residues 58–81 (RAKLIWVATMLVPLVSISSYAGLA). Topologically, residues 82–105 (SGLTVGFLQMPPGHALAGQEVLSP) are extracellular. The helical transmembrane segment at 106-127 (WGRYLTWTFSTPMILLALGLLA) threads the bilayer. At 128–130 (DTD) the chain is on the cytoplasmic side. Residues 131 to 154 (IASLFTAITMDIGMCVTGLAAALI) traverse the membrane as a helical segment. The Extracellular portion of the chain corresponds to 155–157 (TSS). Residues 158 to 180 (HLLRWVFYGISCAFFVAVLYVLL) traverse the membrane as a helical segment. Over 181–192 (VQWPADAEAAGT) the chain is Cytoplasmic. A helical membrane pass occupies residues 193–216 (SEIFGTLKILTVVLWLGYPILWAL). The Extracellular portion of the chain corresponds to 217–225 (GSEGVALLS). The chain crosses the membrane as a helical span at residues 226–254 (VGVTSWGYSGLDILAKYVFAFLLLRWVAA). Lys241 is subject to N6-(retinylidene)lysine. The Cytoplasmic portion of the chain corresponds to 255 to 276 (NEGAVSGSGMSIGSGGAAPADD).

Belongs to the archaeal/bacterial/fungal opsin family.

The protein resides in the cell membrane. Functionally, light-driven chloride pump. The sequence is that of Halorhodopsin (hop) from Halobacterium halobium (strain port).